Consider the following 104-residue polypeptide: Large ribosomal subunit protein bL27 (104 aa).

Positions 1-15 (MNNKYFLTKIDLQFF) are excised as a propeptide.

It belongs to the bacterial ribosomal protein bL27 family. Post-translationally, the N-terminus is cleaved by ribosomal processing cysteine protease Prp.

This is Large ribosomal subunit protein bL27 from Mycoplasma pneumoniae (strain ATCC 29342 / M129 / Subtype 1) (Mycoplasmoides pneumoniae).